The following is a 74-amino-acid chain: MVHPRFVFFAFLALSVLLAVMNEDSILSSNKGDSLCCNDHPEFGICTNKSCNKWCLQGCTRGGFCKRKICHCYC.

Positions methionine 1–alanine 19 are cleaved as a signal peptide. Disulfide bonds link cysteine 36–cysteine 74, cysteine 46–cysteine 65, cysteine 51–cysteine 70, and cysteine 55–cysteine 72.

This sequence belongs to the DEFL family.

It localises to the secreted. This is Putative defensin-like protein 27 from Arabidopsis thaliana (Mouse-ear cress).